Here is a 112-residue protein sequence, read N- to C-terminus: MSTVGELACSYAVMILEDEGIAITADKIATLVKAAGVSIESYWPMLFAKMAEKRNVTDLIMNVGAGGGGGAPVAAAAPAAGGGAAAAPAAEEKKKDEPAEESDGDLGFGLFD.

The tract at residues 85-112 (AAAPAAEEKKKDEPAEESDGDLGFGLFD) is disordered. Ser-102 carries the phosphoserine modification.

This sequence belongs to the eukaryotic ribosomal protein P1/P2 family. In terms of assembly, P1 and P2 exist as dimers at the large ribosomal subunit.

Its function is as follows. Plays an important role in the elongation step of protein synthesis. This is Large ribosomal subunit protein P1w (RPP1A) from Arabidopsis thaliana (Mouse-ear cress).